Reading from the N-terminus, the 250-residue chain is Phosphoribosylaminoimidazole-succinocarboxamide synthase (250 aa).

This sequence belongs to the SAICAR synthetase family.

It carries out the reaction 5-amino-1-(5-phospho-D-ribosyl)imidazole-4-carboxylate + L-aspartate + ATP = (2S)-2-[5-amino-1-(5-phospho-beta-D-ribosyl)imidazole-4-carboxamido]succinate + ADP + phosphate + 2 H(+). It participates in purine metabolism; IMP biosynthesis via de novo pathway; 5-amino-1-(5-phospho-D-ribosyl)imidazole-4-carboxamide from 5-amino-1-(5-phospho-D-ribosyl)imidazole-4-carboxylate: step 1/2. In Bifidobacterium longum (strain DJO10A), this protein is Phosphoribosylaminoimidazole-succinocarboxamide synthase.